Here is a 741-residue protein sequence, read N- to C-terminus: 1,4-alpha-glucan branching enzyme GlgB 2 (741 aa).

The segment at 1-38 (MALRDTSIPEPSGPVPPAPGACATAPPLDPTDRGRLLA) is disordered. Asp-421 acts as the Nucleophile in catalysis. Glu-474 (proton donor) is an active-site residue.

It belongs to the glycosyl hydrolase 13 family. GlgB subfamily. As to quaternary structure, monomer.

It catalyses the reaction Transfers a segment of a (1-&gt;4)-alpha-D-glucan chain to a primary hydroxy group in a similar glucan chain.. It participates in glycan biosynthesis; glycogen biosynthesis. In terms of biological role, catalyzes the formation of the alpha-1,6-glucosidic linkages in glycogen by scission of a 1,4-alpha-linked oligosaccharide from growing alpha-1,4-glucan chains and the subsequent attachment of the oligosaccharide to the alpha-1,6 position. This is 1,4-alpha-glucan branching enzyme GlgB 2 (glgB2) from Streptomyces coelicolor (strain ATCC BAA-471 / A3(2) / M145).